The primary structure comprises 253 residues: 5'-nucleotidase SurE (253 aa).

A divalent metal cation is bound by residues aspartate 8, aspartate 9, serine 39, and asparagine 92.

The protein belongs to the SurE nucleotidase family. It depends on a divalent metal cation as a cofactor.

It is found in the cytoplasm. The catalysed reaction is a ribonucleoside 5'-phosphate + H2O = a ribonucleoside + phosphate. In terms of biological role, nucleotidase that shows phosphatase activity on nucleoside 5'-monophosphates. The chain is 5'-nucleotidase SurE from Burkholderia pseudomallei (strain 1710b).